The primary structure comprises 483 residues: MEVNQDVSVREQIFHDWVRECIICSLLFSTLYLLSYIVITKFKKHADFATVDVEDAAVNRIALWMCTFTLAVSVGAVLLLPFSIISNEVLLSVPHNYYIQWLNGSLIHGLWNLVFLFSNLSLVFLMPFAYLFTEAEGFAGSKKGVMSRVYETTVVLLLLTLLVFGIVWVASAIFDDDSAGRESLYDLWEYYLPYLYSGISLFGVLLLLLCTPFGLSRMFSVTGNLLVKPRLLENLEEHLSCTAFEEAAISRKISTKASCWLNLNMEALQKRLLAIQSHRITLEMRRRASPWQRNLVYPLAMLLLLALTGITVLIVCVNVLELLIDEAAMPKGIQGSQLGKVSFSVFGSFGAAVQVILIFYLMASSVVGFYSSPLFIQLLPQKQNTPMTKIIGNCVSLLILSSALPVFSRTLGITRFDLLGDFGRFNWLGNFYLILLYNMMFAGLATLCLVKKFTWAVQAELIRAFGLDRLPLSVKKIRSQGKA.

The Extracellular segment spans residues 1–21 (MEVNQDVSVREQIFHDWVREC). A helical transmembrane segment spans residues 22 to 42 (IICSLLFSTLYLLSYIVITKF). Topologically, residues 43-60 (KKHADFATVDVEDAAVNR) are cytoplasmic. The helical transmembrane segment at 61 to 81 (IALWMCTFTLAVSVGAVLLLP) threads the bilayer. Residues 82–112 (FSIISNEVLLSVPHNYYIQWLNGSLIHGLWN) lie on the Extracellular side of the membrane. A helical transmembrane segment spans residues 113 to 133 (LVFLFSNLSLVFLMPFAYLFT). Residues 134-153 (EAEGFAGSKKGVMSRVYETT) lie on the Cytoplasmic side of the membrane. A helical membrane pass occupies residues 154–174 (VVLLLLTLLVFGIVWVASAIF). Residues 175-194 (DDDSAGRESLYDLWEYYLPY) are Extracellular-facing. A helical transmembrane segment spans residues 195–215 (LYSGISLFGVLLLLLCTPFGL). Over 216–294 (SRMFSVTGNL…RRRASPWQRN (79 aa)) the chain is Cytoplasmic. The helical transmembrane segment at 295–315 (LVYPLAMLLLLALTGITVLIV) threads the bilayer. The Extracellular segment spans residues 316 to 342 (CVNVLELLIDEAAMPKGIQGSQLGKVS). Residues 343–363 (FSVFGSFGAAVQVILIFYLMA) traverse the membrane as a helical segment. Residues 364 to 386 (SSVVGFYSSPLFIQLLPQKQNTP) lie on the Cytoplasmic side of the membrane. The chain crosses the membrane as a helical span at residues 387 to 407 (MTKIIGNCVSLLILSSALPVF). Over 408-429 (SRTLGITRFDLLGDFGRFNWLG) the chain is Extracellular. A helical membrane pass occupies residues 430-450 (NFYLILLYNMMFAGLATLCLV). The Cytoplasmic segment spans residues 451–483 (KKFTWAVQAELIRAFGLDRLPLSVKKIRSQGKA).

Belongs to the LIMR family. As to quaternary structure, dimer. Can also form higher oligomers.

It is found in the cell membrane. The protein resides in the endoplasmic reticulum membrane. In terms of biological role, may play a role in lymphocyte development by negatively regulating the canonical Wnt signaling pathway. May act as a LCN1 receptor. The chain is Protein LMBR1L (lmbr1l) from Xenopus laevis (African clawed frog).